Here is a 478-residue protein sequence, read N- to C-terminus: Trigger factor (478 aa).

The span at 154–167 (MAKDSRSFEPREEG) shows a compositional bias: basic and acidic residues. Disordered stretches follow at residues 154–173 (MAKD…AQSG) and 444–478 (LFAE…KAAG). In terms of domain architecture, PPIase FKBP-type spans 173–258 (GDRVTIDFVG…VKAVAAPGET (86 aa)).

Belongs to the FKBP-type PPIase family. Tig subfamily.

The protein localises to the cytoplasm. It carries out the reaction [protein]-peptidylproline (omega=180) = [protein]-peptidylproline (omega=0). In terms of biological role, involved in protein export. Acts as a chaperone by maintaining the newly synthesized protein in an open conformation. Functions as a peptidyl-prolyl cis-trans isomerase. This chain is Trigger factor, found in Methylorubrum populi (strain ATCC BAA-705 / NCIMB 13946 / BJ001) (Methylobacterium populi).